The chain runs to 593 residues: Ribonuclease Y (593 aa).

A helical membrane pass occupies residues 6–26 (ILLMYLIVGLLTALTVLIFVF). The KH domain occupies 218–278 (DPIKVKKVTD…IKLEVAYNAL (61 aa)). In terms of domain architecture, HD spans 354-464 (VLTHSIEAAQ…TKIADFLSAA (111 aa)).

This sequence belongs to the RNase Y family.

The protein resides in the cell membrane. In terms of biological role, endoribonuclease that initiates mRNA decay. This Mycoplasmoides gallisepticum (strain R(low / passage 15 / clone 2)) (Mycoplasma gallisepticum) protein is Ribonuclease Y.